The chain runs to 88 residues: Anti-CBASS protein 2 (88 aa).

3',3'-cGAMP is bound by residues tyrosine 8, lysine 9, histidine 11, lysine 23, arginine 79, and phenylalanine 82.

This sequence belongs to the Acb2 family. Homohexamer when bound to 3',3'-cGAMP.

Functionally, antagonizes CBASS (cyclic oligonucleotide-based antiphage signaling system). Binds and sequesters host-produced 3',3'-cyclic GMP-AMP (cGAMP) with a dissociation constant of about 30 nM; each homohexamer binds 3 cGAMP molecules with 1 cGAMP molecule binding to 2 monomers. Sequestration of cGAMP inhibits the cGAMP-activated phospholipase activity of host CBASS effector protein CapV. The sequence is that of Anti-CBASS protein 2 from Enterobacteria phage T4 (Bacteriophage T4).